The primary structure comprises 293 residues: MPWIQLKLNTTGNQAESLGDVLVESGAVSVTFQDTHDNPVFEPLPGETRLWGDTDVIGLYDAETDMADVVAMLECHPQIGKGFIHKIEQLEDKDWEREWMDNFHPMRFGERLWICPSWRDVPDPTAVNVMLDPGLAFGTGTHPTTALCLQWLDSLDLNGKTLIDFGCGSGILAIAALKLGAARAIGIDIDPQAIQASRDNAQRNGVSERLELYLAKDQPAELSADVVVANILAGPLRELALLISVLPTTGGHLGLSGVLATQAAGVAQAYEDKFILDPVAEKEEWCRITGIKK.

Positions 145, 166, 188, and 230 each coordinate S-adenosyl-L-methionine.

This sequence belongs to the methyltransferase superfamily. PrmA family.

Its subcellular location is the cytoplasm. The catalysed reaction is L-lysyl-[protein] + 3 S-adenosyl-L-methionine = N(6),N(6),N(6)-trimethyl-L-lysyl-[protein] + 3 S-adenosyl-L-homocysteine + 3 H(+). Functionally, methylates ribosomal protein L11. The polypeptide is Ribosomal protein L11 methyltransferase (Yersinia pseudotuberculosis serotype I (strain IP32953)).